Reading from the N-terminus, the 95-residue chain is Large ribosomal subunit protein bL27 (95 aa).

Positions 1–10 (MRFILNLQFF) are excised as a propeptide.

It belongs to the bacterial ribosomal protein bL27 family. Post-translationally, the N-terminus is cleaved by ribosomal processing cysteine protease Prp.

The sequence is that of Large ribosomal subunit protein bL27 from Mesoplasma florum (strain ATCC 33453 / NBRC 100688 / NCTC 11704 / L1) (Acholeplasma florum).